The following is a 223-amino-acid chain: MDKLNRLEEHLGYKFKNKTLLKEALTHKSMKSSVNNERLEFLGDAVLDLIVGEYLFFKFKDTDEGNLSKLRAALVNEKSFASISSQIRLGDFLYLSAAEDNNNGRNKPSLVSDALEALMGAIYLESGLEAVKKIFINLLESQYNNIDLQSLGKDYKTTLQEITQARFGVTPRYELVSSSGPDHKKSFEMAVFLNDKELARAIGNSKKEAEQSAAWKVLQGMNI.

The region spanning 4–127 (LNRLEEHLGY…LMGAIYLESG (124 aa)) is the RNase III domain. Residue E40 participates in Mg(2+) binding. D44 is a catalytic residue. Positions 113 and 116 each coordinate Mg(2+). Residue E116 is part of the active site. Residues 154–223 (DYKTTLQEIT…AWKVLQGMNI (70 aa)) form the DRBM domain.

The protein belongs to the ribonuclease III family. In terms of assembly, homodimer. Mg(2+) serves as cofactor.

The protein localises to the cytoplasm. The enzyme catalyses Endonucleolytic cleavage to 5'-phosphomonoester.. Digests double-stranded RNA. Involved in the processing of primary rRNA transcript to yield the immediate precursors to the large and small rRNAs (23S and 16S). Processes some mRNAs, and tRNAs when they are encoded in the rRNA operon. Processes pre-crRNA and tracrRNA of type II CRISPR loci if present in the organism. The chain is Ribonuclease 3 from Campylobacter fetus subsp. fetus (strain 82-40).